Consider the following 429-residue polypeptide: Enolase (429 aa).

Q168 is a binding site for (2R)-2-phosphoglycerate. E210 serves as the catalytic Proton donor. The Mg(2+) site is built by D247, E288, and D315. Residues K340, R369, S370, and K391 each contribute to the (2R)-2-phosphoglycerate site. Catalysis depends on K340, which acts as the Proton acceptor.

It belongs to the enolase family. Mg(2+) serves as cofactor.

The protein resides in the cytoplasm. Its subcellular location is the secreted. The protein localises to the cell surface. It carries out the reaction (2R)-2-phosphoglycerate = phosphoenolpyruvate + H2O. Its pathway is carbohydrate degradation; glycolysis; pyruvate from D-glyceraldehyde 3-phosphate: step 4/5. Its function is as follows. Catalyzes the reversible conversion of 2-phosphoglycerate (2-PG) into phosphoenolpyruvate (PEP). It is essential for the degradation of carbohydrates via glycolysis. The sequence is that of Enolase from Nostoc sp. (strain PCC 7120 / SAG 25.82 / UTEX 2576).